Reading from the N-terminus, the 633-residue chain is Phosphomethylpyrimidine synthase (633 aa).

The span at 1 to 13 (MNIRSNPDTTLPA) shows a compositional bias: polar residues. Positions 1–22 (MNIRSNPDTTLPAVTTGPLPSS) are disordered. Substrate contacts are provided by residues asparagine 221, methionine 250, tyrosine 279, histidine 315, 335-337 (SRG), 376-379 (DGLR), and glutamate 415. Histidine 419 serves as a coordination point for Zn(2+). Tyrosine 442 lines the substrate pocket. Histidine 483 is a binding site for Zn(2+). Residues cysteine 563, cysteine 566, and cysteine 571 each contribute to the [4Fe-4S] cluster site.

It belongs to the ThiC family. Homodimer. The cofactor is [4Fe-4S] cluster.

It carries out the reaction 5-amino-1-(5-phospho-beta-D-ribosyl)imidazole + S-adenosyl-L-methionine = 4-amino-2-methyl-5-(phosphooxymethyl)pyrimidine + CO + 5'-deoxyadenosine + formate + L-methionine + 3 H(+). It functions in the pathway cofactor biosynthesis; thiamine diphosphate biosynthesis. In terms of biological role, catalyzes the synthesis of the hydroxymethylpyrimidine phosphate (HMP-P) moiety of thiamine from aminoimidazole ribotide (AIR) in a radical S-adenosyl-L-methionine (SAM)-dependent reaction. The sequence is that of Phosphomethylpyrimidine synthase from Bradyrhizobium sp. (strain BTAi1 / ATCC BAA-1182).